A 285-amino-acid chain; its full sequence is 2,3,4,5-tetrahydropyridine-2,6-dicarboxylate N-succinyltransferase (285 aa).

Substrate is bound by residues Arg-111 and Asp-148.

It belongs to the transferase hexapeptide repeat family. As to quaternary structure, homotrimer.

It localises to the cytoplasm. It catalyses the reaction (S)-2,3,4,5-tetrahydrodipicolinate + succinyl-CoA + H2O = (S)-2-succinylamino-6-oxoheptanedioate + CoA. It participates in amino-acid biosynthesis; L-lysine biosynthesis via DAP pathway; LL-2,6-diaminopimelate from (S)-tetrahydrodipicolinate (succinylase route): step 1/3. In Allorhizobium ampelinum (strain ATCC BAA-846 / DSM 112012 / S4) (Agrobacterium vitis (strain S4)), this protein is 2,3,4,5-tetrahydropyridine-2,6-dicarboxylate N-succinyltransferase.